The chain runs to 130 residues: Small ribosomal subunit protein uS8 (130 aa).

This sequence belongs to the universal ribosomal protein uS8 family. Part of the 30S ribosomal subunit.

One of the primary rRNA binding proteins, it binds directly to 16S rRNA central domain where it helps coordinate assembly of the platform of the 30S subunit. This is Small ribosomal subunit protein uS8 (rps8) from Methanocaldococcus jannaschii (strain ATCC 43067 / DSM 2661 / JAL-1 / JCM 10045 / NBRC 100440) (Methanococcus jannaschii).